A 1372-amino-acid chain; its full sequence is DNA-directed RNA polymerase subunit beta (1372 aa).

This sequence belongs to the RNA polymerase beta chain family. As to quaternary structure, the RNAP catalytic core consists of 2 alpha, 1 beta, 1 beta' and 1 omega subunit. When a sigma factor is associated with the core the holoenzyme is formed, which can initiate transcription.

The catalysed reaction is RNA(n) + a ribonucleoside 5'-triphosphate = RNA(n+1) + diphosphate. In terms of biological role, DNA-dependent RNA polymerase catalyzes the transcription of DNA into RNA using the four ribonucleoside triphosphates as substrates. The sequence is that of DNA-directed RNA polymerase subunit beta from Rickettsia bellii (strain RML369-C).